We begin with the raw amino-acid sequence, 261 residues long: Protein STAY-GREEN, chloroplastic (261 aa).

A chloroplast-targeting transit peptide spans 1–54 (MDTLTSAPLLTTKFKPSFSPQQKPCFPHRRRFENGKKNQSIVPVARLFGPAIFE).

Belongs to the staygreen family.

It is found in the plastid. The protein resides in the chloroplast. In terms of biological role, probably involved in the disassembling mechanism of the intact light-harvesting complex of photosystem II (LHCII) in the thylakoid membranes. Required for the chlorophyll breakdown pathway. Acts independent and upstream of pheophorbide a oxygenase (PAO). In Pisum sativum (Garden pea), this protein is Protein STAY-GREEN, chloroplastic (SGR).